A 477-amino-acid chain; its full sequence is Sensor protein kinase PmrB (477 aa).

2 helical membrane passes run Leu-13 to Tyr-33 and Leu-161 to Val-181. One can recognise an HAMP domain in the interval Ala-186 to Glu-238. Residues Asp-246–Gln-459 form the Histidine kinase domain. His-249 is subject to Phosphohistidine; by autocatalysis. Residues Leu-455–Ile-477 are disordered.

It is found in the membrane. The enzyme catalyses ATP + protein L-histidine = ADP + protein N-phospho-L-histidine.. Member of the two-component regulatory system PmrA/PmrB that plays a role in the regulation of resistance towards polymyxin B and cationic antimicrobial peptides in response to limiting concentrations of Mg(2+). Also autoregulates its own pmrAB operon under Mg(2+)-limiting conditions. May function as a membrane-associated protein kinase that phosphorylates PmrA in response to environmental signals leading to activation of specific gene promoters. The chain is Sensor protein kinase PmrB (pmrB) from Pseudomonas aeruginosa (strain ATCC 15692 / DSM 22644 / CIP 104116 / JCM 14847 / LMG 12228 / 1C / PRS 101 / PAO1).